We begin with the raw amino-acid sequence, 456 residues long: tRNA modification GTPase MnmE (456 aa).

Positions 23, 85, and 124 each coordinate (6S)-5-formyl-5,6,7,8-tetrahydrofolate. The 157-residue stretch at 220 to 376 (GVAVLIAGKP…LKESIFQTFI (157 aa)) folds into the TrmE-type G domain. Residue Asn-230 coordinates K(+). GTP-binding positions include 230–235 (NVGKSS), 249–255 (TSVPGTT), and 274–277 (DTAG). Ser-234 lines the Mg(2+) pocket. Residues Thr-249, Val-251, and Thr-254 each contribute to the K(+) site. Thr-255 provides a ligand contact to Mg(2+). Lys-456 contacts (6S)-5-formyl-5,6,7,8-tetrahydrofolate.

Belongs to the TRAFAC class TrmE-Era-EngA-EngB-Septin-like GTPase superfamily. TrmE GTPase family. As to quaternary structure, homodimer. Heterotetramer of two MnmE and two MnmG subunits. Requires K(+) as cofactor.

The protein localises to the cytoplasm. Functionally, exhibits a very high intrinsic GTPase hydrolysis rate. Involved in the addition of a carboxymethylaminomethyl (cmnm) group at the wobble position (U34) of certain tRNAs, forming tRNA-cmnm(5)s(2)U34. The chain is tRNA modification GTPase MnmE from Geobacter sulfurreducens (strain ATCC 51573 / DSM 12127 / PCA).